The primary structure comprises 264 residues: MSDILQKICAVKREEVTAALAAKPLAIVRAEAEAQPAARDFVGAIRGRITAGRPAVIAEIKKASPSKGVIREDFRPADIAPSYEAAGAACLSVLTDKPFFQGAPEYLQAARAACALPALRKDFLVDAYQVYEARAMGADAILLIAACLSLAEMQDMEAIAHGLGMGVLVEVHDGAELEQALKLRTPLVGINNRNLRTFEVSLQTTLGLLPRLAAEADRIVVTESGILAPADVALMRENGVNAFLVGEAFMRVPDPGAGLRALFG.

The protein belongs to the TrpC family.

The enzyme catalyses 1-(2-carboxyphenylamino)-1-deoxy-D-ribulose 5-phosphate + H(+) = (1S,2R)-1-C-(indol-3-yl)glycerol 3-phosphate + CO2 + H2O. It functions in the pathway amino-acid biosynthesis; L-tryptophan biosynthesis; L-tryptophan from chorismate: step 4/5. This Azoarcus sp. (strain BH72) protein is Indole-3-glycerol phosphate synthase.